The sequence spans 474 residues: Trehalose-6-phosphate synthase (474 aa).

Position 10 (Arg-10) interacts with D-glucose 6-phosphate. Gly-22 to Gly-23 lines the UDP-alpha-D-glucose pocket. D-glucose 6-phosphate-binding residues include Tyr-77 and Asp-131. Arg-263 and Lys-268 together coordinate UDP-alpha-D-glucose. Residue Arg-301 participates in D-glucose 6-phosphate binding. Residues Phe-340 and Leu-366–Glu-370 contribute to the UDP-alpha-D-glucose site.

The protein belongs to the glycosyltransferase 20 family. In terms of assembly, homotetramer.

The catalysed reaction is D-glucose 6-phosphate + UDP-alpha-D-glucose = alpha,alpha-trehalose 6-phosphate + UDP + H(+). Its pathway is glycan biosynthesis; trehalose biosynthesis. Functionally, probably involved in the osmoprotection via the biosynthesis of trehalose. Catalyzes the transfer of glucose from UDP-alpha-D-glucose (UDP-Glc) to D-glucose 6-phosphate (Glc-6-P) to form trehalose-6-phosphate. Acts with retention of the anomeric configuration of the UDP-sugar donor. The polypeptide is Trehalose-6-phosphate synthase (Cronobacter sakazakii (strain ATCC BAA-894) (Enterobacter sakazakii)).